The following is a 482-amino-acid chain: tRNA sulfurtransferase (482 aa).

The THUMP domain maps to 61-165; sequence SAIRDALTRI…QDRLLLIKGR (105 aa). Residues 183–184, K265, G287, and Q296 contribute to the ATP site; that span reads LI. A disulfide bridge links C344 with C456. The Rhodanese domain occupies 404 to 482; it reads FAPTDVLLDI…GFSNVKVYRP (79 aa). C456 acts as the Cysteine persulfide intermediate in catalysis.

It belongs to the ThiI family.

The protein localises to the cytoplasm. The enzyme catalyses [ThiI sulfur-carrier protein]-S-sulfanyl-L-cysteine + a uridine in tRNA + 2 reduced [2Fe-2S]-[ferredoxin] + ATP + H(+) = [ThiI sulfur-carrier protein]-L-cysteine + a 4-thiouridine in tRNA + 2 oxidized [2Fe-2S]-[ferredoxin] + AMP + diphosphate. The catalysed reaction is [ThiS sulfur-carrier protein]-C-terminal Gly-Gly-AMP + S-sulfanyl-L-cysteinyl-[cysteine desulfurase] + AH2 = [ThiS sulfur-carrier protein]-C-terminal-Gly-aminoethanethioate + L-cysteinyl-[cysteine desulfurase] + A + AMP + 2 H(+). The protein operates within cofactor biosynthesis; thiamine diphosphate biosynthesis. Its function is as follows. Catalyzes the ATP-dependent transfer of a sulfur to tRNA to produce 4-thiouridine in position 8 of tRNAs, which functions as a near-UV photosensor. Also catalyzes the transfer of sulfur to the sulfur carrier protein ThiS, forming ThiS-thiocarboxylate. This is a step in the synthesis of thiazole, in the thiamine biosynthesis pathway. The sulfur is donated as persulfide by IscS. In Pectobacterium carotovorum subsp. carotovorum (strain PC1), this protein is tRNA sulfurtransferase.